The chain runs to 207 residues: Ras-related protein Rab-7a (207 aa).

T2 carries the post-translational modification N-acetylthreonine. The GTP site is built by S17, G18, V19, G20, K21, T22, S23, S34, N35, Y37, and T40. Residue T22 coordinates Mg(2+). The short motif at 28-41 (YVNKKFSNQYKATI) is the Switch 1 element. Mg(2+) contacts are provided by T40 and D63. G66 is a binding site for GTP. Residues 67-82 (QERFQSLGVAFYRGAD) carry the Switch 2 motif. S72 is modified (phosphoserine). N125, K126, D128, A156, and K157 together coordinate GTP. Glycyl lysine isopeptide (Lys-Gly) (interchain with G-Cter in ubiquitin) cross-links involve residues K191 and K194. Residues C205 and C207 are each lipidated (S-geranylgeranyl cysteine). C207 is subject to Cysteine methyl ester.

It belongs to the small GTPase superfamily. Rab family. As to quaternary structure, interacts with NTRK1/TRKA. Interacts with RILP. Interacts with PSMA7. Interacts with RNF115. Interacts with FYCO1. Interacts with the PIK3C3/VPS34-PIK3R4 complex. The GTP-bound form interacts with OSBPL1A. The GTP-bound form interacts with RAC1. Interacts with CLN3. Interacts with CHM, the substrate-binding subunit of the Rab geranylgeranyltransferase complex. Interacts with C9orf72. Does not interact with HPS4 and the BLOC-3 complex (heterodimer of HPS1 and HPS4). Interacts with CLN5. Interacts with PLEKHM1 (via N- and C-terminus). Interacts with PRPH; the interaction is direct. Interacts with VPS13A. The GDP-bound form interacts with RIMOC1. Interacts with the MON1A-CCZ1B complex and this interaction is enhanced in the presence of RIMOC1. Interacts with VPS39 and VPS41. Forms a ternary complex with LAMP2 and RUFY4; the interaction with LAMP2 is mediated by RUFY4 (via RUN and coiled coil domains). Mg(2+) is required as a cofactor. Deubiquitination at Lys-191 and Lys-194 by USP32. Post-translationally, phosphorylated at Ser-72 by LRRK1; phosphorylation is dependent on protein kinase C (PKC) activation of LRRK1. In terms of processing, prenylated. Prenylation is required for association with cellular membranes.

The protein resides in the cytoplasmic vesicle. It localises to the phagosome membrane. Its subcellular location is the late endosome membrane. It is found in the lysosome membrane. The protein localises to the melanosome membrane. The protein resides in the autophagosome membrane. It localises to the lipid droplet. Its subcellular location is the endosome membrane. It is found in the mitochondrion membrane. It catalyses the reaction GTP + H2O = GDP + phosphate + H(+). Regulated by guanine nucleotide exchange factors (GEFs) which promote the exchange of bound GDP for free GTP. Regulated by GTPase activating proteins (GAPs) which increase the GTP hydrolysis activity. Inhibited by GDP dissociation inhibitors (GDIs). Functionally, the small GTPases Rab are key regulators of intracellular membrane trafficking, from the formation of transport vesicles to their fusion with membranes. Rabs cycle between an inactive GDP-bound form and an active GTP-bound form that is able to recruit to membranes different sets of downstream effectors directly responsible for vesicle formation, movement, tethering and fusion. In its active state, RAB7A binds to a variety of effector proteins playing a key role in the regulation of endo-lysosomal trafficking. Governs early-to-late endosomal maturation, microtubule minus-end as well as plus-end directed endosomal migration and positioning, and endosome-lysosome transport through different protein-protein interaction cascades. Also plays a central role in growth-factor-mediated cell signaling, nutrient-transporter-mediated nutrient uptake, neurotrophin transport in the axons of neurons and lipid metabolism. Also involved in regulation of some specialized endosomal membrane trafficking, such as maturation of melanosomes, pathogen-induced phagosomes (or vacuoles) and autophagosomes. Plays a role in the maturation and acidification of phagosomes that engulf pathogens, such as S.aureus and Mycobacteria. Plays a role in the fusion of phagosomes with lysosomes. In concert with RAC1, plays a role in regulating the formation of RBs (ruffled borders) in osteoclasts. Controls the endosomal trafficking and neurite outgrowth signaling of NTRK1/TRKA. Regulates the endocytic trafficking of the EGF-EGFR complex by regulating its lysosomal degradation. Involved in the ADRB2-stimulated lipolysis through lipophagy, a cytosolic lipase-independent autophagic pathway. Required for the exosomal release of SDCBP, CD63 and syndecan. Required for vesicular trafficking and cell surface expression of ACE2. May play a role in PRPH neuronal intermediate filament assembly. The chain is Ras-related protein Rab-7a (RAB7A) from Bos taurus (Bovine).